The following is a 627-amino-acid chain: MASRPGALTEWPWSPLGSFKYLLVAPLVMASMHSYVTAVDEEKDLSRLMIVVLMLWRIVHSQIWISVSRQRTAKGTNKIVDKPIEFEQVDRERTWDDQVIFNTLLMYLANIKLPGASHLPPWRLDGAILMALLHAGPVEFLYYWFHRALHHHFLYSRYHSHHHSSIVTEPITSVVHPFAEHIAYTLLFAIPMVTASLCGILSIVSIMGYITYIDFMNNMGHCNFELFPKRLFHLFPPLKFLCYTPSFHSLHHTQFRTNYSLFMPIYDFIYGTTDNLTDSLYERSLEIEEESPDVIHLTHLTTHNSIYQMRLGFPSLSSCPLWSRPPWYLTCFMWPFTLLCSFALTSAIPLRTFVFERNRLRDLTVHSHLLPKFSFHYKSQRHHESINTIIEEAILEADEKGVKVMSLGLMNNREELNGSGEMYVQKYPKLKIRLVDGSSMAATVVINNIPKEATEIVFRGNLTKVASAVVFALCQKGVKVVVLREEEHSKLIKSGVDKNLVLSTSNSYYSPKVWLVGDGIENEEQMKAKEGTLFVPFSHFPPNKLRKDCFYQSTPAMRVPKSAQNIDSCENWLGRRVMSAWKIGGIVHALEGWEEHDCGNTCNVLRLHAIWEAALRHDFQPLPPSPL.

The next 5 helical transmembrane spans lie at 19-39, 48-68, 126-146, 186-206, and 328-348; these read FKYL…VTAV, LMIV…ISVS, GAIL…YWFH, LLFA…IVSI, and YLTC…TSAI. The region spanning 138-272 is the Fatty acid hydroxylase domain; sequence VEFLYYWFHR…MPIYDFIYGT (135 aa).

Belongs to the sterol desaturase family. Expressed in flowers and siliques. Not detected in pollen, pedicels and seeds.

It localises to the membrane. The sequence is that of Protein CER1-like 1 from Arabidopsis thaliana (Mouse-ear cress).